An 802-amino-acid chain; its full sequence is Peptidyl serine alpha-galactosyltransferase (802 aa).

Residues 1 to 19 (MRWDLITAIVAALVVSVLA) form the signal peptide. At 20–750 (DESGQMAPYR…SEGRFSTLKL (731 aa)) the chain is on the extracellular side. Asn-214, Asn-275, Asn-425, and Asn-637 each carry an N-linked (GlcNAc...) asparagine glycan. The segment at 699 to 741 (RNCPEPGSESTEKISVSRKVGNIETKQTQGSDETKESSGSSES) is disordered. Residues 751–771 (WVIALWLISGVGFLVVMLLVF) form a helical membrane-spanning segment. At 772 to 802 (STRRGRGTTRGKGYRNKRRTSYSNTGFLDTK) the chain is on the cytoplasmic side. Residues 777–791 (RGTTRGKGYRNKRRT) show a composition bias toward basic residues. The interval 777-802 (RGTTRGKGYRNKRRTSYSNTGFLDTK) is disordered. Residues 792-802 (SYSNTGFLDTK) show a composition bias toward polar residues.

Its subcellular location is the endoplasmic reticulum membrane. Its function is as follows. Glycosyltransferase involved in the O-galactosylation of several proteins including extensins. Catalyzes the transfer of alpha-galactosyl to Ser residues. Hydroxylation of proline residues adjacent to the serine acceptor is required for activity. The sequence is that of Peptidyl serine alpha-galactosyltransferase from Arabidopsis thaliana (Mouse-ear cress).